We begin with the raw amino-acid sequence, 102 residues long: MANEKIRIRLKAYDHRVLDQSAEKIVETAKRSGATVSGPIPLPTEKAIYTVLRAVHKYKDAREQFEMRTHKRLIDIVNPTPKTVDALMRLELPSGVDIEIKL.

It belongs to the universal ribosomal protein uS10 family. In terms of assembly, part of the 30S ribosomal subunit.

Its function is as follows. Involved in the binding of tRNA to the ribosomes. The chain is Small ribosomal subunit protein uS10 from Exiguobacterium sibiricum (strain DSM 17290 / CCUG 55495 / CIP 109462 / JCM 13490 / 255-15).